Here is a 1162-residue protein sequence, read N- to C-terminus: Integrin alpha-L (1162 aa).

An N-terminal signal peptide occupies residues 1–23 (MSFRIAGPRLLLLGLQLFAKAWS). At 24–1088 (YNLDTRPTQS…DLIHEKEMLH (1065 aa)) the chain is on the extracellular side. FG-GAP repeat units lie at residues 28–79 (TRPT…FCQP) and 80–138 (VSLH…GPML). A disulfide bridge connects residues cysteine 70 and cysteine 77. Asparagine 86 carries an N-linked (GlcNAc...) asparagine glycan. 2 disulfide bridges follow: cysteine 108–cysteine 126 and cysteine 147–cysteine 199. One can recognise a VWFA domain in the interval 153-325 (DLVFLFDGSQ…EKLKDLFTDL (173 aa)). N-linked (GlcNAc...) asparagine glycans are attached at residues asparagine 185 and asparagine 270. FG-GAP repeat units follow at residues 336-387 (NRQD…GATF), 390-443 (QEPL…GGRW), 444-504 (NQTQ…LFEM), 505-561 (VSEL…GLSP), and 565-625 (QRIQ…FSPE). N-linked (GlcNAc...) asparagine glycosylation is present at asparagine 444. Positions 466, 468, 470, 474, 528, 530, 532, 536, 588, 592, and 596 each coordinate Ca(2+). Cysteine 651 and cysteine 705 form a disulfide bridge. N-linked (GlcNAc...) asparagine glycosylation is found at asparagine 668, asparagine 696, asparagine 724, and asparagine 728. A disulfide bond links cysteine 768 and cysteine 774. The N-linked (GlcNAc...) asparagine glycan is linked to asparagine 777. Cysteine 841 and cysteine 857 are joined by a disulfide. N-linked (GlcNAc...) asparagine glycosylation is found at asparagine 858, asparagine 881, asparagine 891, asparagine 900, and asparagine 928. Disulfide bonds link cysteine 994–cysteine 1010 and cysteine 1018–cysteine 1049. A glycan (N-linked (GlcNAc...) asparagine) is linked at asparagine 1057. The helical transmembrane segment at 1089 to 1109 (VYVLSGIGGLVLLFLIFLALY) threads the bilayer. Topologically, residues 1110–1162 (KVGFFKRNLKEKMEADGGVPNGSPPEDTDPLAVPGEETKDMGCLEPLRESDKD) are cytoplasmic. The GFFKR motif motif lies at 1112 to 1116 (GFFKR). Residues 1124 to 1162 (ADGGVPNGSPPEDTDPLAVPGEETKDMGCLEPLRESDKD) form a disordered region. Residues 1145-1162 (EETKDMGCLEPLRESDKD) are compositionally biased toward basic and acidic residues.

The protein belongs to the integrin alpha chain family. Heterodimer of an alpha and a beta subunit. The ITGAL alpha subunit associates with the ITGB2 beta subunit. Interacts with THBD. Interacts with CD226. In resting T-cells, up to 40% of surface ITGAL is constitutively phosphorylated. Phosphorylation causes conformational changes needed for ligand binding and is necessary for the activation by some physiological agents. Leukocytes.

Its subcellular location is the cell membrane. Its function is as follows. Integrin ITGAL/ITGB2 is a receptor for ICAM1, ICAM2, ICAM3 and ICAM4. Integrin ITGAL/ITGB2 is a receptor for F11R. Integrin ITGAL/ITGB2 is a receptor for the secreted form of ubiquitin-like protein ISG15; the interaction is mediated by ITGAL. Involved in a variety of immune phenomena including leukocyte-endothelial cell interaction, cytotoxic T-cell mediated killing, and antibody dependent killing by granulocytes and monocytes. Contributes to natural killer cell cytotoxicity. Involved in leukocyte adhesion and transmigration of leukocytes including T-cells and neutrophils. Acts as a platform at the immunological synapse to translate TCR engagement and density of the ITGAL ligand ICAM1 into graded adhesion. Required for generation of common lymphoid progenitor cells in bone marrow, indicating the role in lymphopoiesis. Integrin ITGAL/ITGB2 in association with ICAM3, contributes to apoptotic neutrophil phagocytosis by macrophages. This Mus musculus (Mouse) protein is Integrin alpha-L.